The following is a 137-amino-acid chain: uncharacterized protein (137 aa).

The disordered stretch occupies residues 116–137; the sequence is ARPPRGSGGTRTARNGARTASE. Over residues 125 to 137 the composition is skewed to polar residues; sequence TRTARNGARTASE.

This is an uncharacterized protein from Mycobacterium bovis (strain ATCC BAA-935 / AF2122/97).